The following is a 208-amino-acid chain: Rac-like GTP-binding protein ARAC8 (208 aa).

Residue 15-22 participates in GTP binding; the sequence is GDGAVGKT. The short motif at 37–45 is the Effector region element; that stretch reads YIPTVFDNF. GTP-binding positions include 62 to 66 and 120 to 123; these read DTAGQ and TKMD. 2 S-palmitoyl cysteine lipidation sites follow: Cys-199 and Cys-205.

Belongs to the small GTPase superfamily. Rho family. In terms of assembly, interacts with ICR1. Binds to SPK1. Although this sequence has a C-terminal -CXXX, it is palmitoylated at Cys-205, rather than prenylated.

It localises to the membrane. Functionally, acts as a negative regulator of abscisic acid (ABA) responses. This is Rac-like GTP-binding protein ARAC8 (ARAC8) from Arabidopsis thaliana (Mouse-ear cress).